The sequence spans 291 residues: ATP synthase gamma chain (291 aa).

The protein belongs to the ATPase gamma chain family. In terms of assembly, F-type ATPases have 2 components, CF(1) - the catalytic core - and CF(0) - the membrane proton channel. CF(1) has five subunits: alpha(3), beta(3), gamma(1), delta(1), epsilon(1). CF(0) has three main subunits: a, b and c.

Its subcellular location is the cell inner membrane. Functionally, produces ATP from ADP in the presence of a proton gradient across the membrane. The gamma chain is believed to be important in regulating ATPase activity and the flow of protons through the CF(0) complex. This Neisseria meningitidis serogroup C (strain 053442) protein is ATP synthase gamma chain.